Here is a 160-residue protein sequence, read N- to C-terminus: NADH-quinone oxidoreductase subunit B (160 aa).

Residues Cys37, Cys38, Cys102, and Cys132 each coordinate [4Fe-4S] cluster.

Belongs to the complex I 20 kDa subunit family. NDH-1 is composed of 14 different subunits. Subunits NuoB, C, D, E, F, and G constitute the peripheral sector of the complex. [4Fe-4S] cluster serves as cofactor.

Its subcellular location is the cell inner membrane. The catalysed reaction is a quinone + NADH + 5 H(+)(in) = a quinol + NAD(+) + 4 H(+)(out). Functionally, NDH-1 shuttles electrons from NADH, via FMN and iron-sulfur (Fe-S) centers, to quinones in the respiratory chain. Couples the redox reaction to proton translocation (for every two electrons transferred, four hydrogen ions are translocated across the cytoplasmic membrane), and thus conserves the redox energy in a proton gradient. This chain is NADH-quinone oxidoreductase subunit B, found in Cupriavidus metallidurans (strain ATCC 43123 / DSM 2839 / NBRC 102507 / CH34) (Ralstonia metallidurans).